The chain runs to 75 residues: MASKPFFRRRKVCPFSGDNAPKIDYKDTRLLQRYISERGKIVPSRITAVSAKKQRELARAIKRARFLALLPYAVK.

The protein belongs to the bacterial ribosomal protein bS18 family. As to quaternary structure, part of the 30S ribosomal subunit. Forms a tight heterodimer with protein bS6.

Its function is as follows. Binds as a heterodimer with protein bS6 to the central domain of the 16S rRNA, where it helps stabilize the platform of the 30S subunit. The sequence is that of Small ribosomal subunit protein bS18 from Roseobacter denitrificans (strain ATCC 33942 / OCh 114) (Erythrobacter sp. (strain OCh 114)).